Reading from the N-terminus, the 600-residue chain is MNNQKYIRNFSIIAHIDHGKSTLADRLIEHCGGLNAREMSQQVLDSMDIEKERGITIKAQTVRLVYKAKNGNTYYLNLMDTPGHVDFSYEVSRSLAACEGSLLVVDSTQGVEAQTLANVYQAIANDHEIVPVLNKIDLAASEPEHVKKQIEDIIGIDASEAVLISAKNGIGIDSVLEAIINKLPSPKESSTDTLKALLVDSWYDPYLGVVILVRIIDGTLRKNMRVKMIGTNSVYTVEHVGFFTPKKHISDVLYAGEIGFFTASIKRVSDCKVGDTITDEKKSCEQALPGFKPNIPVVFCGFYPTDSAEFEHLKDSLAKLRLNDASFEYEMESSSALGVGFRCGFLGLLHLEIIQERLSREFNLDLITTAPSVIYKIYMLDGESLEIHNPADLPDLQKIASMEEPWIKATIMVPDEFIGTVLSLCKEKRGIQLDHSYISNRAKIVYKLPLNEIVYDFYDRLKSCSKGYASFEWQMDVYELSDLVNLRILVNGEVVDALSTIVHRSRAEQRGRALCVRLKDLIPRQQIDIAIQASVGNRIIARETIKALRKDVLSKCYGGDISRKRKLLEKQKAGKKKMRQYGNIEIPQSAFIAALQIGGE.

The tr-type G domain occupies Lys5–Lys187. GTP contacts are provided by residues Asp17 to Thr22 and Asn134 to Asp137.

It belongs to the TRAFAC class translation factor GTPase superfamily. Classic translation factor GTPase family. LepA subfamily.

Its subcellular location is the cell inner membrane. The enzyme catalyses GTP + H2O = GDP + phosphate + H(+). Required for accurate and efficient protein synthesis under certain stress conditions. May act as a fidelity factor of the translation reaction, by catalyzing a one-codon backward translocation of tRNAs on improperly translocated ribosomes. Back-translocation proceeds from a post-translocation (POST) complex to a pre-translocation (PRE) complex, thus giving elongation factor G a second chance to translocate the tRNAs correctly. Binds to ribosomes in a GTP-dependent manner. This Rickettsia typhi (strain ATCC VR-144 / Wilmington) protein is Elongation factor 4.